The sequence spans 123 residues: Large ribosomal subunit protein bL12 (123 aa).

This sequence belongs to the bacterial ribosomal protein bL12 family. Homodimer. Part of the ribosomal stalk of the 50S ribosomal subunit. Forms a multimeric L10(L12)X complex, where L10 forms an elongated spine to which 2 to 4 L12 dimers bind in a sequential fashion. Binds GTP-bound translation factors.

In terms of biological role, forms part of the ribosomal stalk which helps the ribosome interact with GTP-bound translation factors. Is thus essential for accurate translation. In Burkholderia vietnamiensis (strain G4 / LMG 22486) (Burkholderia cepacia (strain R1808)), this protein is Large ribosomal subunit protein bL12.